The sequence spans 176 residues: 2-C-methyl-D-erythritol 2,4-cyclodiphosphate synthase (176 aa).

A divalent metal cation is bound by residues Asp-23, His-25, and His-60. 23–25 provides a ligand contact to 4-CDP-2-C-methyl-D-erythritol 2-phosphate; that stretch reads DSH. Residue 149–152 participates in 4-CDP-2-C-methyl-D-erythritol 2-phosphate binding; it reads TSGE.

The protein belongs to the IspF family. Homotrimer. It depends on a divalent metal cation as a cofactor.

It catalyses the reaction 4-CDP-2-C-methyl-D-erythritol 2-phosphate = 2-C-methyl-D-erythritol 2,4-cyclic diphosphate + CMP. It functions in the pathway isoprenoid biosynthesis; isopentenyl diphosphate biosynthesis via DXP pathway; isopentenyl diphosphate from 1-deoxy-D-xylulose 5-phosphate: step 4/6. Involved in the biosynthesis of isopentenyl diphosphate (IPP) and dimethylallyl diphosphate (DMAPP), two major building blocks of isoprenoid compounds. Catalyzes the conversion of 4-diphosphocytidyl-2-C-methyl-D-erythritol 2-phosphate (CDP-ME2P) to 2-C-methyl-D-erythritol 2,4-cyclodiphosphate (ME-CPP) with a corresponding release of cytidine 5-monophosphate (CMP). The polypeptide is 2-C-methyl-D-erythritol 2,4-cyclodiphosphate synthase (Chlamydia caviae (strain ATCC VR-813 / DSM 19441 / 03DC25 / GPIC) (Chlamydophila caviae)).